A 544-amino-acid polypeptide reads, in one-letter code: Putative glycerol-3-phosphate transporter 4 (544 aa).

Transmembrane regions (helical) follow at residues 28–47, 121–141, 156–176, 181–201, 218–238, and 240–260; these read TFRY…YHAS, VAFL…GDSL, FFVG…WFFL, AAGL…GNWF, SVGN…GWGW, and FIAP…FLAA. The tract at residues 281-313 is disordered; sequence KRDVEEEEEEVEEDLGTDVEGDGEGSSGSGSGY. The span at 285 to 303 shows a compositional bias: acidic residues; the sequence is EEEEEEVEEDLGTDVEGDG. The next 7 membrane-spanning stretches (helical) occupy residues 319 to 339, 342 to 362, 371 to 391, 402 to 422, 428 to 448, 471 to 491, and 494 to 514; these read VGLL…CLFF, LVAY…TIGG, GNLS…CGYI, AAAF…YGGV, ILLM…ITTA, AIID…TGFL, and LGWQ…GLLL.

The protein belongs to the major facilitator superfamily. Organophosphate:Pi antiporter (OPA) (TC 2.A.1.4) family.

Its subcellular location is the membrane. The chain is Putative glycerol-3-phosphate transporter 4 from Arabidopsis thaliana (Mouse-ear cress).